Reading from the N-terminus, the 251-residue chain is Ribosome maturation factor RimP (251 aa).

Positions 176–251 are disordered; that stretch reads SLRRGSAPPQ…ARLKNRDTLH (76 aa). A compositionally biased stretch (acidic residues) spans 186–196; the sequence is DGEEGDEEEGA. Over residues 216–226 the composition is skewed to basic and acidic residues; the sequence is PKLDKKSDKPV.

The protein belongs to the RimP family.

The protein localises to the cytoplasm. Functionally, required for maturation of 30S ribosomal subunits. The polypeptide is Ribosome maturation factor RimP (Methylorubrum extorquens (strain PA1) (Methylobacterium extorquens)).